The chain runs to 329 residues: Phenylalanine--tRNA ligase alpha subunit (329 aa).

A Mg(2+)-binding site is contributed by E254.

It belongs to the class-II aminoacyl-tRNA synthetase family. Phe-tRNA synthetase alpha subunit type 1 subfamily. In terms of assembly, tetramer of two alpha and two beta subunits. Mg(2+) serves as cofactor.

It is found in the cytoplasm. It catalyses the reaction tRNA(Phe) + L-phenylalanine + ATP = L-phenylalanyl-tRNA(Phe) + AMP + diphosphate + H(+). The polypeptide is Phenylalanine--tRNA ligase alpha subunit (Haemophilus influenzae (strain 86-028NP)).